The sequence spans 44 residues: Large ribosomal subunit protein bL34 (44 aa).

Composition is skewed to basic residues over residues Met1–Lys14 and Leu31–Val44. The disordered stretch occupies residues Met1–Val44.

It belongs to the bacterial ribosomal protein bL34 family.

This is Large ribosomal subunit protein bL34 from Gloeobacter violaceus (strain ATCC 29082 / PCC 7421).